The primary structure comprises 65 residues: Large ribosomal subunit protein bL32 (65 aa).

The span at 1–18 (MAVPKRRHSKSRTRKRRS) shows a compositional bias: basic residues. The tract at residues 1 to 20 (MAVPKRRHSKSRTRKRRSTY) is disordered.

It belongs to the bacterial ribosomal protein bL32 family.

This is Large ribosomal subunit protein bL32 from Salinibacter ruber (strain DSM 13855 / M31).